The primary structure comprises 421 residues: POU domain, class 4, transcription factor 1 (421 aa).

The POU-IV box signature appears at 57–66 (RAEALAAVDI). Disordered regions lie at residues 94 to 117 (STVPLAHHHHHHHHHQALEPGDLL) and 133 to 200 (GAGA…GLGH). The segment covering 99 to 108 (AHHHHHHHHH) has biased composition (basic residues). The segment covering 133–186 (GAGAAGGGGGAHDGPGGGGGPGGGGGPGGGGPGGGGGGGGPGGGGGGPGGGLLG) has biased composition (gly residues). One can recognise a POU-specific domain in the interval 262–339 (DSDTDPRELE…ILQAWLEEAE (78 aa)). Positions 357–416 (KKRKRTSIAAPEKRSLEAYFAVQPRPSSEKIAAIAEKLDLKKNVVRVWFCNQRQKQKRMK) form a DNA-binding region, homeobox.

This sequence belongs to the POU transcription factor family. Class-4 subfamily. Interacts (via N-terminus) with RIT2; the interaction controls POU4F1 transactivation activity on some neuronal target genes. Isoform 1 interacts with POU4F2 isoform 2; this interaction inhibits both POU4F1 DNA-binding and transcriptional activities. Isoform 1 interacts (C-terminus) with ESR1 (via DNA-binding domain); this interaction decreases the estrogen receptor ESR1 transcriptional activity in a DNA- and ligand 17-beta-estradiol-independent manner. As to expression, expressed in mature osteoclasts (at protein level). Brain, peripheral sensory nervous system and retina. In the adult nervous system, predominates in the medial habenula, superficial gray of the superior colliculus, red nucleus, mesencephalic nucleus of the trigeminal ganglion, nucleus ambiguus, inferior olivary nucleus, and peripheral sensory ganglia.

The protein resides in the nucleus. Its subcellular location is the cytoplasm. In terms of biological role, multifunctional transcription factor with different regions mediating its different effects. Acts by binding (via its C-terminal domain) to sequences related to the consensus octamer motif 5'-ATGCAAAT-3' in the regulatory regions of its target genes. Regulates the expression of specific genes involved in differentiation and survival within a subset of neuronal lineages. It has been shown that activation of some of these genes requires its N-terminal domain, maybe through a neuronal-specific cofactor. Activates BCL2 expression and protects neuronal cells from apoptosis (via the N-terminal domain). Induces neuronal process outgrowth and the coordinate expression of genes encoding synaptic proteins. Exerts its major developmental effects in somatosensory neurons and in brainstem nuclei involved in motor control. Stimulates the binding affinity of the nuclear estrogene receptor ESR1 to DNA estrogen response element (ERE), and hence modulates ESR1-induced transcriptional activity. May positively regulate POU4F2 and POU4F3. Regulates dorsal root ganglion sensory neuron specification and axonal projection into the spinal cord. Plays a role in TNFSF11-mediated terminal osteoclast differentiation. Negatively regulates its own expression interacting directly with a highly conserved autoregulatory domain surrounding the transcription initiation site. Its function is as follows. Able to act as transcription factor, cannot regulate the expression of the same subset of genes than isoform 1. Does not have antiapoptotic effect on neuronal cells. The protein is POU domain, class 4, transcription factor 1 (Pou4f1) of Mus musculus (Mouse).